Here is a 265-residue protein sequence, read N- to C-terminus: Inositol-1-monophosphatase (265 aa).

Residues Glu69, Asp87, Ile89, and Asp90 each contribute to the Mg(2+) site. Glu69 contacts substrate. Substrate-binding positions include 89–92, Arg185, and Asp214; that span reads IDGT. Position 214 (Asp214) interacts with Mg(2+).

Belongs to the inositol monophosphatase superfamily. It depends on Mg(2+) as a cofactor.

It carries out the reaction a myo-inositol phosphate + H2O = myo-inositol + phosphate. The enzyme catalyses a ribonucleoside 5'-phosphate + H2O = a ribonucleoside + phosphate. In terms of biological role, hydrolyzes myo-inositol monophosphate. Catalyzes the dephosphorylation of GMP and IMP. In Bacillus subtilis (strain 168), this protein is Inositol-1-monophosphatase.